The sequence spans 154 residues: Ascorbate-specific PTS system EIIA component (154 aa).

Positions 6 to 150 (SLAVNKSIRL…QEVLDLIDRT (145 aa)) constitute a PTS EIIA type-2 domain. H68 serves as the catalytic Tele-phosphohistidine intermediate. H68 carries the phosphohistidine modification.

Its subcellular location is the cytoplasm. In terms of biological role, the phosphoenolpyruvate-dependent sugar phosphotransferase system (sugar PTS), a major carbohydrate active transport system, catalyzes the phosphorylation of incoming sugar substrates concomitantly with their translocation across the cell membrane. The enzyme II UlaABC PTS system is involved in ascorbate transport. This is Ascorbate-specific PTS system EIIA component (ulaC) from Shigella dysenteriae serotype 1 (strain Sd197).